Consider the following 128-residue polypeptide: Flagellar basal body rod protein FlgB (128 aa).

It belongs to the flagella basal body rod proteins family. As to quaternary structure, the basal body constitutes a major portion of the flagellar organelle and consists of a number of rings mounted on a central rod. In Gram-negative bacteria, at least four rings, L, P, S and M are present, whereas Gram-positive bacteria lack the L and P rings. The rod consists of about 26 subunits of FlgG in the distal portion, and FlgB, FlgC and FlgF build up the proximal portion of the rod with about 6 subunits each. Rod assembly occurs by export via the flagellum-specific pathway of its constituent proteins and by their incorporation into the rod structure in the probable order of FlgB, FlgC, FlgF and FlgG. Another protein, FliE, also assembles onto the stable rod structure.

The protein localises to the bacterial flagellum basal body. Its function is as follows. Structural component of flagellum, the bacterial motility apparatus. Part of the rod structure of flagellar basal body. This is Flagellar basal body rod protein FlgB from Cereibacter sphaeroides (Rhodobacter sphaeroides).